The following is a 203-amino-acid chain: MIGRLRGIILEKQPPIVLLETGGVGYEVHMPMTCFYELPEAGQEAIVFTHFVVREDAQLLYGFNNKQERTLFKELIKTNGVGPKLALAILSGMSAQQFVNAVEREELGALVKLPGIGKKTAERLIVEMKDRFKGLHGDLFTPAVDLVLTSPASPTSEDAEQEAVAALVALGYKPQEASRMVSKIARPDASSETLIRDALRAAL.

Positions 1 to 64 (MIGRLRGIIL…EDAQLLYGFN (64 aa)) are domain I. The domain II stretch occupies residues 65–142 (NKQERTLFKE…KGLHGDLFTP (78 aa)). The interval 143–154 (AVDLVLTSPASP) is flexible linker. The domain III stretch occupies residues 155–203 (TSEDAEQEAVAALVALGYKPQEASRMVSKIARPDASSETLIRDALRAAL).

It belongs to the RuvA family. In terms of assembly, homotetramer. Forms an RuvA(8)-RuvB(12)-Holliday junction (HJ) complex. HJ DNA is sandwiched between 2 RuvA tetramers; dsDNA enters through RuvA and exits via RuvB. An RuvB hexamer assembles on each DNA strand where it exits the tetramer. Each RuvB hexamer is contacted by two RuvA subunits (via domain III) on 2 adjacent RuvB subunits; this complex drives branch migration. In the full resolvosome a probable DNA-RuvA(4)-RuvB(12)-RuvC(2) complex forms which resolves the HJ.

The protein localises to the cytoplasm. Functionally, the RuvA-RuvB-RuvC complex processes Holliday junction (HJ) DNA during genetic recombination and DNA repair, while the RuvA-RuvB complex plays an important role in the rescue of blocked DNA replication forks via replication fork reversal (RFR). RuvA specifically binds to HJ cruciform DNA, conferring on it an open structure. The RuvB hexamer acts as an ATP-dependent pump, pulling dsDNA into and through the RuvAB complex. HJ branch migration allows RuvC to scan DNA until it finds its consensus sequence, where it cleaves and resolves the cruciform DNA. In Salmonella agona (strain SL483), this protein is Holliday junction branch migration complex subunit RuvA.